The following is a 353-amino-acid chain: DNA-directed RNA polymerase subunit alpha (353 aa).

Residues 1–245 form an alpha N-terminal domain (alpha-NTD) region; that stretch reads MEKIQKITYK…AHFQIIGNIN (245 aa). An alpha C-terminal domain (alpha-CTD) region spans residues 261–353; that stretch reads EREIKSTTPI…QLNNSEEGEE (93 aa).

It belongs to the RNA polymerase alpha chain family. As to quaternary structure, homodimer. The RNAP catalytic core consists of 2 alpha, 1 beta, 1 beta' and 1 omega subunit. When a sigma factor is associated with the core the holoenzyme is formed, which can initiate transcription.

It carries out the reaction RNA(n) + a ribonucleoside 5'-triphosphate = RNA(n+1) + diphosphate. Its function is as follows. DNA-dependent RNA polymerase catalyzes the transcription of DNA into RNA using the four ribonucleoside triphosphates as substrates. This Mycoplasma sp protein is DNA-directed RNA polymerase subunit alpha.